Here is a 95-residue protein sequence, read N- to C-terminus: MLPGFTMIITSLLLTFFREVEHLLPECLTITNTPQRTLVLIQRFTLLQKVMTIHLLLSIGTLGSLFTLHPQLLKTNLLQKLHKELNSNLDYLISC.

Positions 1 to 22 are cleaved as a signal peptide; that stretch reads MLPGFTMIITSLLLTFFREVEH. Residues 23-52 lie on the Extracellular side of the membrane; it reads LLPECLTITNTPQRTLVLIQRFTLLQKVMT. A helical membrane pass occupies residues 53 to 69; that stretch reads IHLLLSIGTLGSLFTLH. The Cytoplasmic portion of the chain corresponds to 70 to 95; the sequence is PQLLKTNLLQKLHKELNSNLDYLISC.

It localises to the host membrane. This is an uncharacterized protein from Acidianus bottle-shaped virus (isolate Italy/Pozzuoli) (ABV).